A 209-amino-acid chain; its full sequence is Ancillary SecYEG translocon subunit (209 aa).

Residues 1–23 are Cytoplasmic-facing; sequence MAAHLEEQQELDNFKYFWKTTGK. A helical transmembrane segment spans residues 24–42; sequence WLFALLILAALGYLGYTVY. Over 43-209 the chain is Periplasmic; that stretch reads QNRAASQNQE…LLQMKLDSLK (167 aa). Residues 161–194 form a TPR repeat; sequence PLLMETKGDVYAAQEKSQEALKNYGQALEKMPQD.

Belongs to the YfgM family. As to quaternary structure, interacts with the SecYEG translocon. Forms a complex with PpiD.

Its subcellular location is the cell inner membrane. In terms of biological role, may mediate protein transfer from the SecYEG translocon to the periplasmic chaperone network via its periplasmic C-terminal region. The sequence is that of Ancillary SecYEG translocon subunit from Neisseria gonorrhoeae (strain ATCC 700825 / FA 1090).